Here is a 284-residue protein sequence, read N- to C-terminus: Shikimate dehydrogenase (NADP(+)) (284 aa).

Residues 19–21 and Thr-66 each bind shikimate; that span reads SFS. The active-site Proton acceptor is the Lys-70. An NADP(+)-binding site is contributed by Asp-82. Shikimate contacts are provided by Asn-91 and Asp-106. Residues 130–134 and Ile-226 contribute to the NADP(+) site; that span reads GSGGS. Tyr-228 serves as a coordination point for shikimate. Gly-249 contributes to the NADP(+) binding site.

It belongs to the shikimate dehydrogenase family. Homodimer.

The catalysed reaction is shikimate + NADP(+) = 3-dehydroshikimate + NADPH + H(+). It participates in metabolic intermediate biosynthesis; chorismate biosynthesis; chorismate from D-erythrose 4-phosphate and phosphoenolpyruvate: step 4/7. Its function is as follows. Involved in the biosynthesis of the chorismate, which leads to the biosynthesis of aromatic amino acids. Catalyzes the reversible NADPH linked reduction of 3-dehydroshikimate (DHSA) to yield shikimate (SA). This Methanococcus vannielii (strain ATCC 35089 / DSM 1224 / JCM 13029 / OCM 148 / SB) protein is Shikimate dehydrogenase (NADP(+)).